The primary structure comprises 199 residues: dCTP deaminase (199 aa).

DCTP-binding positions include 110–115 (RSSLAR), Asp-128, 136–138 (VLE), Tyr-171, and Gln-182. The active-site Proton donor/acceptor is the Glu-138.

The protein belongs to the dCTP deaminase family. Homotrimer.

The enzyme catalyses dCTP + H2O + H(+) = dUTP + NH4(+). It functions in the pathway pyrimidine metabolism; dUMP biosynthesis; dUMP from dCTP (dUTP route): step 1/2. Catalyzes the deamination of dCTP to dUTP. In Pseudoalteromonas atlantica (strain T6c / ATCC BAA-1087), this protein is dCTP deaminase.